The following is a 251-amino-acid chain: Ribosomal RNA small subunit methyltransferase J (251 aa).

S-adenosyl-L-methionine is bound by residues 100–101, 116–117, and D170; these read RD and ER.

Belongs to the methyltransferase superfamily. RsmJ family.

It is found in the cytoplasm. The catalysed reaction is guanosine(1516) in 16S rRNA + S-adenosyl-L-methionine = N(2)-methylguanosine(1516) in 16S rRNA + S-adenosyl-L-homocysteine + H(+). In terms of biological role, specifically methylates the guanosine in position 1516 of 16S rRNA. The sequence is that of Ribosomal RNA small subunit methyltransferase J from Haemophilus ducreyi (strain 35000HP / ATCC 700724).